The chain runs to 392 residues: Putative purine permease 19 (392 aa).

Residues 1-16 (MGFHTKSPDRVTHEEE) are compositionally biased toward basic and acidic residues. Residues 1 to 29 (MGFHTKSPDRVTHEEEANIGVDNQPRETT) are disordered. A Phosphoserine modification is found at S30. 10 consecutive transmembrane segments (helical) span residues 46–66 (ICIF…TLLL), 88–108 (WLQS…LLLW), 128–148 (LFLL…LYAI), 154–174 (VFFL…TTII), 182–202 (WIIL…TSSG), 220–240 (WCAF…QLGF), 254–274 (VILM…VGLF), 300–320 (LIGL…LVCL), 325–345 (FSNV…VLAF), and 354–374 (FFKE…VYSL).

Belongs to the purine permeases (TC 2.A.7.14) family.

The protein resides in the membrane. This is Putative purine permease 19 (PUP19) from Arabidopsis thaliana (Mouse-ear cress).